Reading from the N-terminus, the 509-residue chain is GMP synthase [glutamine-hydrolyzing] (509 aa).

In terms of domain architecture, Glutamine amidotransferase type-1 spans 4-193; it reads NVLILDFGSQ…LVKIAQVPQN (190 aa). Residue Cys79 is the Nucleophile of the active site. Active-site residues include His167 and Glu169. Residues 194–384 form the GMPS ATP-PPase domain; the sequence is FTPNAFVSDM…LGIDAELLGR (191 aa). An ATP-binding site is contributed by 221 to 227; it reads SGGVDST.

As to quaternary structure, homodimer.

The catalysed reaction is XMP + L-glutamine + ATP + H2O = GMP + L-glutamate + AMP + diphosphate + 2 H(+). It participates in purine metabolism; GMP biosynthesis; GMP from XMP (L-Gln route): step 1/1. Functionally, catalyzes the synthesis of GMP from XMP. In Flavobacterium psychrophilum (strain ATCC 49511 / DSM 21280 / CIP 103535 / JIP02/86), this protein is GMP synthase [glutamine-hydrolyzing].